The primary structure comprises 148 residues: Phospholipase A2-alpha (148 aa).

The first 20 residues, 1–20 (MAAPIILFSFLLFFSVSVSA), serve as a signal peptide directing secretion. 6 disulfides stabilise this stretch: cysteine 38-cysteine 66, cysteine 42-cysteine 72, cysteine 47-cysteine 122, cysteine 59-cysteine 79, cysteine 78-cysteine 105, and cysteine 85-cysteine 98. The Ca(2+) site is built by tyrosine 58, glycine 60, and tyrosine 63. Histidine 82 is a catalytic residue. Aspartate 83 contacts Ca(2+).

Belongs to the phospholipase A2 family. Interacts with MYB30. Ca(2+) is required as a cofactor. In terms of tissue distribution, ubiquitous but expressed at a low level.

It localises to the secreted. Its subcellular location is the golgi apparatus. The protein localises to the cytoplasmic vesicle. The protein resides in the nucleus. It carries out the reaction a 1,2-diacyl-sn-glycero-3-phosphocholine + H2O = a 1-acyl-sn-glycero-3-phosphocholine + a fatty acid + H(+). In terms of biological role, PA2 catalyzes the calcium-dependent hydrolysis of the 2-acyl groups in 3-sn-phosphoglycerides. Releases lysophospholipids (LPLs) and free fatty acids (FFAs) from membrane phospholipids in response to hormones and other external stimuli. Modulates the trafficking of PIN proteins to the plasma membrane. Negatively regulates MYB30 transcriptional activity and hypersensitive response control. This chain is Phospholipase A2-alpha, found in Arabidopsis thaliana (Mouse-ear cress).